A 277-amino-acid chain; its full sequence is Large ribosomal subunit protein uL2 (277 aa).

Disordered regions lie at residues 32 to 58 (KSLTKGKVSRAGRDSSGRISVRRRGGG) and 225 to 277 (VAMN…RRNN).

It belongs to the universal ribosomal protein uL2 family. In terms of assembly, part of the 50S ribosomal subunit. Forms a bridge to the 30S subunit in the 70S ribosome.

Its function is as follows. One of the primary rRNA binding proteins. Required for association of the 30S and 50S subunits to form the 70S ribosome, for tRNA binding and peptide bond formation. It has been suggested to have peptidyltransferase activity; this is somewhat controversial. Makes several contacts with the 16S rRNA in the 70S ribosome. In Borrelia recurrentis (strain A1), this protein is Large ribosomal subunit protein uL2.